The primary structure comprises 209 residues: Large ribosomal subunit protein bL25 (209 aa).

Residues 188-209 form a disordered region; sequence STSMEKEGEGSQEPTAAPSSEN. Residues 199–209 are compositionally biased toward polar residues; it reads QEPTAAPSSEN.

Belongs to the bacterial ribosomal protein bL25 family. CTC subfamily. Part of the 50S ribosomal subunit; part of the 5S rRNA/L5/L18/L25 subcomplex. Contacts the 5S rRNA. Binds to the 5S rRNA independently of L5 and L18.

Functionally, this is one of the proteins that binds to the 5S RNA in the ribosome where it forms part of the central protuberance. The chain is Large ribosomal subunit protein bL25 from Ehrlichia canis (strain Jake).